The sequence spans 81 residues: Putative defensin-like protein 56 (81 aa).

An N-terminal signal peptide occupies residues 1–23; it reads MNITKAYVIFFLVVILTNSLSNS. 4 disulfides stabilise this stretch: C46-C80, C50-C73, C59-C78, and C63-C79.

This sequence belongs to the DEFL family.

Its subcellular location is the secreted. This is Putative defensin-like protein 56 from Arabidopsis thaliana (Mouse-ear cress).